We begin with the raw amino-acid sequence, 538 residues long: Metal transporter Nramp5 (538 aa).

A run of 12 helical transmembrane segments spans residues 44 to 64 (FLAH…PGNL), 77 to 97 (ELLW…SLAA), 118 to 138 (FVKI…DIPE), 140 to 160 (IGTA…GVLI), 181 to 201 (FLIS…LSIV), 227 to 247 (IALL…ALVL), 264 to 284 (FFLY…IAVV), 324 to 346 (SAIV…GTYA), 365 to 385 (NLMT…IGGS), 391 to 411 (LIII…IPLL), 427 to 447 (IYII…NMYF), and 467 to 487 (VLVG…VVYL). A disordered region spans residues 518–538 (AVDDDEPLPYRDDLADIPLPR).

This sequence belongs to the NRAMP (TC 2.A.55) family.

It is found in the membrane. Probable metal transporter. This chain is Metal transporter Nramp5 (NRAMP5), found in Oryza sativa subsp. japonica (Rice).